A 209-amino-acid polypeptide reads, in one-letter code: LexA repressor (209 aa).

The segment at residues 28–48 (RVELAKILGFRSANAAEEHLK) is a DNA-binding region (H-T-H motif). Catalysis depends on for autocatalytic cleavage activity residues Ser-126 and Lys-163.

The protein belongs to the peptidase S24 family. Homodimer.

The enzyme catalyses Hydrolysis of Ala-|-Gly bond in repressor LexA.. In terms of biological role, represses a number of genes involved in the response to DNA damage (SOS response), including recA and lexA. In the presence of single-stranded DNA, RecA interacts with LexA causing an autocatalytic cleavage which disrupts the DNA-binding part of LexA, leading to derepression of the SOS regulon and eventually DNA repair. The protein is LexA repressor of Psychromonas ingrahamii (strain DSM 17664 / CCUG 51855 / 37).